Reading from the N-terminus, the 299-residue chain is Serine/threonine-protein kinase 1 (299 aa).

Positions 39–277 constitute a Protein kinase domain; that stretch reads IATKPMFEGG…FKGLVSHPWF (239 aa). Residues 45-53 and K66 each bind ATP; that span reads FEGGRRNNV. The active-site Proton acceptor is the D153.

The protein belongs to the protein kinase superfamily. Ser/Thr protein kinase family.

The protein resides in the virion. Its subcellular location is the host cytoplasm. The enzyme catalyses L-seryl-[protein] + ATP = O-phospho-L-seryl-[protein] + ADP + H(+). It catalyses the reaction L-threonyl-[protein] + ATP = O-phospho-L-threonyl-[protein] + ADP + H(+). Essential for viral replication. It may mediate the virus progression through DNA replication. The protein is Serine/threonine-protein kinase 1 of African swine fever virus (isolate Tick/Malawi/Lil 20-1/1983) (ASFV).